The following is a 1078-amino-acid chain: Disheveled-associated activator of morphogenesis 1 (1078 aa).

S34 carries the post-translational modification Phosphoserine. Positions 45–420 (LPMPPVEELD…QIVIQNDKGQ (376 aa)) constitute a GBD/FH3 domain. Residues 437–526 (RMLVNENEVK…ELSRRAVCAS (90 aa)) are a coiled coil. Disordered regions lie at residues 456–480 (RKEHNELQQKLEKKERECDAKTQEK) and 524–585 (CASI…PLGA). The FH1 domain maps to 528–599 (PGGPSPGAPG…PGAPMGLALK (72 aa)). 2 stretches are compositionally biased toward pro residues: residues 530 to 539 (GPSPGAPGGP) and 548 to 585 (LLPPPPPPPLPGGMLPPPPPPLPPGGPPPPPGPPPLGA). In terms of domain architecture, FH2 spans 600-1009 (KKSIPQPTNA…EERRARMEAQ (410 aa)). Residues 693–702 (AQNCNILLSR) form an actin-binding region. Basic and acidic residues predominate over residues 987–1027 (KQENENMRKKKEEEERRARMEAQLKEQRERERKMRKAKENS). Disordered stretches follow at residues 987–1034 (KQEN…GEFD) and 1055–1078 (RNRKRITNQMTDSSRERPITKLNF). S1027 and S1030 each carry phosphoserine. Residues 1027-1058 (SEESGEFDDLVSALRSGEVFDKDLSKLKRNRK) form the DAD domain. Basic and acidic residues predominate over residues 1067–1078 (SSRERPITKLNF).

This sequence belongs to the formin homology family. Homodimer. Interacts with CIP4, FNBP1 and FNBP1L. Interacts with the SH3 domains of Abl, BTK, endophilin, spectrin and SRC. Binds specifically to GTP-bound CDC42 and RHOA. Interacts with INTU; INTU mediates the indirect interaction between DAAM1 and NPHP4. Interacts (via coiled coil domain) with KANK1 (via coiled coil domain). As to expression, expressed in all tissues examined.

The protein localises to the cytoplasm. It is found in the cytoskeleton. Its subcellular location is the cilium basal body. Binds to disheveled (Dvl) and Rho, and mediates Wnt-induced Dvl-Rho complex formation. May play a role as a scaffolding protein to recruit Rho-GDP and Rho-GEF, thereby enhancing Rho-GTP formation. Can direct nucleation and elongation of new actin filaments. Involved in building functional cilia. Involved in the organization of the subapical actin network in multiciliated epithelial cells. Together with DAAM2, required for myocardial maturation and sarcomere assembly. During cell division, may regulate RHOA activation that signals spindle orientation and chromosomal segregation. This chain is Disheveled-associated activator of morphogenesis 1 (DAAM1), found in Homo sapiens (Human).